A 270-amino-acid polypeptide reads, in one-letter code: Regulatory protein RecX (270 aa).

The protein belongs to the RecX family.

The protein localises to the cytoplasm. In terms of biological role, modulates RecA activity. The polypeptide is Regulatory protein RecX (Bacillus cereus (strain B4264)).